The primary structure comprises 316 residues: BTB/POZ domain-containing adapter for CUL3-mediated RhoA degradation protein 2 (316 aa).

Residues 28-96 (KYVQLNVGGS…LRDDTVTLPQ (69 aa)) form the BTB domain. The span at 268-279 (EATSRSRSQASP) shows a compositional bias: polar residues. The tract at residues 268-287 (EATSRSRSQASPSEDEDTFE) is disordered. Phosphoserine is present on S278. The residue at position 280 (S280) is a Phosphoserine; by CK2.

Belongs to the BACURD family. As to quaternary structure, component of the BCR(TNFAIP1) E3 ubiquitin ligase complex, at least composed of CUL3, TNFAIP1/BACURD2 and RBX1. Interacts with RHOA; with a preference for RhoA-GDP. Interacts with RHOB. Interacts with CSNK2B. Interacts with PCNA. In terms of processing, phosphorylation at Ser-280 by CK2 facilitates the nucleus localization and increases interaction with PCNA.

The protein resides in the cytoplasm. The protein localises to the nucleus. It is found in the endosome. The protein operates within protein modification; protein ubiquitination. Its function is as follows. Substrate-specific adapter of a BCR (BTB-CUL3-RBX1) E3 ubiquitin-protein ligase complex involved in regulation of cytoskeleton structure. The BCR(TNFAIP1) E3 ubiquitin ligase complex mediates the ubiquitination of RHOA, leading to its degradation by the proteasome, thereby regulating the actin cytoskeleton and cell migration. Its interaction with RHOB may regulate apoptosis. May enhance the PCNA-dependent DNA polymerase delta activity. This chain is BTB/POZ domain-containing adapter for CUL3-mediated RhoA degradation protein 2 (Tnfaip1), found in Rattus norvegicus (Rat).